Here is a 235-residue protein sequence, read N- to C-terminus: Zein-alpha PMS1 (235 aa).

An N-terminal signal peptide occupies residues 1–21 (MAAKIFCLLMLLGLSASAATA).

This sequence belongs to the zein family.

Its function is as follows. Zeins are major seed storage proteins. This Zea mays (Maize) protein is Zein-alpha PMS1 (ZMPMS1).